The sequence spans 170 residues: Large ribosomal subunit protein uL18m (170 aa).

It belongs to the universal ribosomal protein uL18 family. As to quaternary structure, component of the mitochondrial ribosome large subunit (39S) which comprises a 16S rRNA and about 50 distinct proteins.

The protein localises to the mitochondrion. This is Large ribosomal subunit protein uL18m (mrpl-18) from Caenorhabditis elegans.